A 38-amino-acid chain; its full sequence is Potassium channel toxin alpha-KTx 3.3 (38 aa).

3 disulfides stabilise this stretch: C8/C28, C14/C33, and C18/C35. Residues 26–33 (GKCMNRKC) form an interaction with Ca(2+)-activated K(+) channels region.

The protein belongs to the short scorpion toxin superfamily. Potassium channel inhibitor family. Alpha-KTx 03 subfamily. In terms of tissue distribution, expressed by the venom gland.

Its subcellular location is the secreted. Potent inhibitor of shaker potassium channels as well as the mammalian homologs of shaker. The protein is Potassium channel toxin alpha-KTx 3.3 of Leiurus hebraeus (Hebrew deathstalker scorpion).